The sequence spans 280 residues: Inner kinetochore subunit fta1 (280 aa).

The protein belongs to the CENP-L/IML3 family. In terms of assembly, component of the inner kinetochore constitutive centromere-associated network (CCAN) (also known as central kinetochore Sim4 complex in fission yeast), which is composed of at least cnl2, cnp3, cnp20, fta1, fta2, fta3, fta4, fta6, fta7, mal2, mhf1, mhf2, mis6, mis15, mis17, sim4 and wip1.

Its subcellular location is the nucleus. It is found in the chromosome. It localises to the centromere. The protein localises to the kinetochore. Functionally, component of the kinetochore, a multiprotein complex that assembles on centromeric DNA and attaches chromosomes to spindle microtubules, mediating chromosome segregation and sister chromatid segregation during meiosis and mitosis. Component of the inner kinetochore constitutive centromere-associated network (CCAN), which serves as a structural platform for outer kinetochore assembly. The sequence is that of Inner kinetochore subunit fta1 (fta1) from Schizosaccharomyces pombe (strain 972 / ATCC 24843) (Fission yeast).